The chain runs to 123 residues: Large ribosomal subunit protein uL14 (123 aa).

It belongs to the universal ribosomal protein uL14 family. As to quaternary structure, part of the 50S ribosomal subunit. Forms a cluster with proteins L3 and L19. In the 70S ribosome, L14 and L19 interact and together make contacts with the 16S rRNA in bridges B5 and B8.

Functionally, binds to 23S rRNA. Forms part of two intersubunit bridges in the 70S ribosome. The protein is Large ribosomal subunit protein uL14 of Blochmanniella floridana.